The sequence spans 126 residues: Protein ApaG (126 aa).

Residues 2–126 (RRKPYELKVE…FSLAIPRRLH (125 aa)) form the ApaG domain.

This Methylococcus capsulatus (strain ATCC 33009 / NCIMB 11132 / Bath) protein is Protein ApaG.